Reading from the N-terminus, the 288-residue chain is MSLSNWPLKKENSEAYNIKNSKQITIPDGLWIKCFDCGLLMYSKVLKRNLKVCPQCSYHFQASSNERIDQLIDQGSWQPMDVHLISTDPLGFKDQKLYSQRLKDTAFKTGLQDAVQTGTGTMQGKKVCLGIMDFRFMGGSMGSVVGEKLTRLLEKATQEKLPAIILCASGGARMQEGMLSLMQMAKISSALEMHKKENLLYISVLTSPTTGGVTASFAMLGDLIIAEPKALIAFAGRRVIEQTIKEDLPDNFQSSEYLFEHGFLDLIVSRTQLRSKLIQILSLHNHSK.

The region spanning 30 to 288 (LWIKCFDCGL…QILSLHNHSK (259 aa)) is the CoA carboxyltransferase N-terminal domain. Zn(2+) contacts are provided by cysteine 34, cysteine 37, cysteine 53, and cysteine 56. The C4-type zinc-finger motif lies at 34-56 (CFDCGLLMYSKVLKRNLKVCPQC).

Belongs to the AccD/PCCB family. As to quaternary structure, acetyl-CoA carboxylase is a heterohexamer composed of biotin carboxyl carrier protein, biotin carboxylase and 2 subunits each of ACCase subunit alpha and ACCase plastid-coded subunit beta (accD). It depends on Zn(2+) as a cofactor.

Its subcellular location is the plastid. The protein localises to the chloroplast stroma. The enzyme catalyses N(6)-carboxybiotinyl-L-lysyl-[protein] + acetyl-CoA = N(6)-biotinyl-L-lysyl-[protein] + malonyl-CoA. It functions in the pathway lipid metabolism; malonyl-CoA biosynthesis; malonyl-CoA from acetyl-CoA: step 1/1. In terms of biological role, component of the acetyl coenzyme A carboxylase (ACC) complex. Biotin carboxylase (BC) catalyzes the carboxylation of biotin on its carrier protein (BCCP) and then the CO(2) group is transferred by the transcarboxylase to acetyl-CoA to form malonyl-CoA. The chain is Acetyl-coenzyme A carboxylase carboxyl transferase subunit beta, chloroplastic from Pyropia yezoensis (Susabi-nori).